The sequence spans 260 residues: Capsid protein (260 aa).

Positions 3–20 (KRPGDIIISTPVSKVRRR) match the Bipartite nuclear localization signal motif. Residues 41–55 (KRRSWTYRPMYRKPR) carry the Nuclear localization signal motif. A zinc finger spans residues 69 to 86 (CEGPCKVQSYEQRDDIKH). The short motif at 102–123 (ITHRVGKRFCVKSIYFLGKVWM) is the Nuclear export signal element. A Bipartite nuclear localization signal motif is present at residues 202 to 251 (KRFFKINSHVTLFIFIQEAAKYENHTENALLLYMACTHASNPVYATMKIR).

It belongs to the geminiviridae capsid protein family. In terms of assembly, homomultimer. Binds to single-stranded and double-stranded viral DNA. Interacts (via nuclear localization signals) with host importin alpha-1a.

It is found in the virion. Its subcellular location is the host nucleus. Functionally, encapsidates the viral genome into characteristic twinned ('geminate') particles. Binds the genomic viral ssDNA and shuttles it into and out of the cell nucleus. Plays a role in protection of the genome from degradation, virus acquisition and transmission by insect vectors, infectivity, and systemic movement. The CP of monopartite geminiviruses is absolutely essential for virus movement. The polypeptide is Capsid protein (Cynanchum acutum (Little mallow)).